A 281-amino-acid polypeptide reads, in one-letter code: Beta-etherase (281 aa).

The 77-residue stretch at 11-87 (DLQLESGCTI…YLDEKYPDRP (77 aa)) folds into the GST N-terminal domain. The interval 244–281 (GDPEPFVRQTGPAGAGGQALNKGPQTTKMPPRVAEKAD) is disordered.

The protein belongs to the GST superfamily.

It is found in the cell inner membrane. Functionally, able to degrade various dimeric lignin compounds. Catalyzes the unique and reductive cleavage of arylglycerol-beta-aryl ether. The polypeptide is Beta-etherase (ligE) (Sphingobium sp. (strain NBRC 103272 / SYK-6)).